The following is a 473-amino-acid chain: Hyaluronidase-2 (473 aa).

Positions 1-20 are cleaved as a signal peptide; it reads MRAGLGPIITLALVLEVAWA. 2 cysteine pairs are disulfide-bonded: cysteine 47–cysteine 340 and cysteine 211–cysteine 227. 2 N-linked (GlcNAc...) asparagine glycosylation sites follow: asparagine 74 and asparagine 103. The active-site Proton donor is glutamate 135. N-linked (GlcNAc...) asparagine glycosylation is present at asparagine 357. The 79-residue stretch at 361–439 folds into the EGF-like domain; it reads ATQYCSWTQC…YLGWGGEQCQ (79 aa). Cystine bridges form between cysteine 365–cysteine 376, cysteine 370–cysteine 427, and cysteine 429–cysteine 438. Residue asparagine 390 is glycosylated (N-linked (GlcNAc...) asparagine). The GPI-anchor amidated asparagine; alternate moiety is linked to residue asparagine 448. An N-linked (GlcNAc...) asparagine; alternate glycan is attached at asparagine 448. Positions 449–473 are cleaved as a propeptide — removed in mature form; sequence ASRAWAGSHLTSLLGLVAVALTWTL.

The protein belongs to the glycosyl hydrolase 56 family. As to quaternary structure, interacts with MST1R. As to expression, widely expressed, with highest expression levels in kidney, lung and liver (at protein level).

The protein resides in the cell membrane. The enzyme catalyses Random hydrolysis of (1-&gt;4)-linkages between N-acetyl-beta-D-glucosamine and D-glucuronate residues in hyaluronate.. Functionally, catalyzes hyaluronan degradation into small fragments that are endocytosed and degraded in lysosomes by HYAL1 and exoglycosidases. Essential for the breakdown of extracellular matrix hyaluronan. This Mus musculus (Mouse) protein is Hyaluronidase-2 (Hyal2).